Consider the following 227-residue polypeptide: Biosynthetic peptidoglycan transglycosylase (227 aa).

Residues 7–27 (VALLTLLLLVAAPYVLTLVYG) traverse the membrane as a helical segment.

Belongs to the glycosyltransferase 51 family.

The protein resides in the cell inner membrane. It carries out the reaction [GlcNAc-(1-&gt;4)-Mur2Ac(oyl-L-Ala-gamma-D-Glu-L-Lys-D-Ala-D-Ala)](n)-di-trans,octa-cis-undecaprenyl diphosphate + beta-D-GlcNAc-(1-&gt;4)-Mur2Ac(oyl-L-Ala-gamma-D-Glu-L-Lys-D-Ala-D-Ala)-di-trans,octa-cis-undecaprenyl diphosphate = [GlcNAc-(1-&gt;4)-Mur2Ac(oyl-L-Ala-gamma-D-Glu-L-Lys-D-Ala-D-Ala)](n+1)-di-trans,octa-cis-undecaprenyl diphosphate + di-trans,octa-cis-undecaprenyl diphosphate + H(+). The protein operates within cell wall biogenesis; peptidoglycan biosynthesis. In terms of biological role, peptidoglycan polymerase that catalyzes glycan chain elongation from lipid-linked precursors. In Rhodopseudomonas palustris (strain HaA2), this protein is Biosynthetic peptidoglycan transglycosylase.